The sequence spans 182 residues: Large ribosomal subunit protein uL6 (182 aa).

It belongs to the universal ribosomal protein uL6 family. As to quaternary structure, part of the 50S ribosomal subunit.

Functionally, this protein binds to the 23S rRNA, and is important in its secondary structure. It is located near the subunit interface in the base of the L7/L12 stalk, and near the tRNA binding site of the peptidyltransferase center. The chain is Large ribosomal subunit protein uL6 from Methanocaldococcus jannaschii (strain ATCC 43067 / DSM 2661 / JAL-1 / JCM 10045 / NBRC 100440) (Methanococcus jannaschii).